The chain runs to 279 residues: Pantothenate synthetase (279 aa).

Residue 26-33 (MGNLHDGH) coordinates ATP. H33 (proton donor) is an active-site residue. Q57 provides a ligand contact to (R)-pantoate. Residue Q57 coordinates beta-alanine. Position 144–147 (144–147 (GKKD)) interacts with ATP. Residue Q150 participates in (R)-pantoate binding. Residue 181–184 (LSSR) coordinates ATP.

It belongs to the pantothenate synthetase family. In terms of assembly, homodimer.

The protein localises to the cytoplasm. The enzyme catalyses (R)-pantoate + beta-alanine + ATP = (R)-pantothenate + AMP + diphosphate + H(+). It functions in the pathway cofactor biosynthesis; (R)-pantothenate biosynthesis; (R)-pantothenate from (R)-pantoate and beta-alanine: step 1/1. Catalyzes the condensation of pantoate with beta-alanine in an ATP-dependent reaction via a pantoyl-adenylate intermediate. In Janthinobacterium sp. (strain Marseille) (Minibacterium massiliensis), this protein is Pantothenate synthetase.